Reading from the N-terminus, the 393-residue chain is MQQTKKLTHSDITIAVMSGPFLQRGEPALVSKWYRTKMALACGVDLVVELPYAFSTQKAETFANGAISILNALHVSEICFGSEDGQIENFYNTISVQKNEEETFNRLVKQFMNAGNSYAKATSEAFLHILSSEKNIDMSQPNNILGFQYIKAILMQNSSMQAQTIKRFASHYHDETFNDQHIASATSIRKQLFSENSSFKEIEPFIPKATASLLASYKQNYGTLHNWEQYFSFFKYKLMTMSPEDLRHIYEIEEGLEHRILSKIQTSSSFHSFMEALKTKRYTWTRLQRACTHILTNTTKEEIHCANIEQHAPYIRLLGMSQKGQTYLSKNKKKIELPILTHTKTFDHPTLHIEQKANSVYFSIIQEPLRTQLLKQDATHHPIRYDETTAKFL.

Positions 81, 142, and 167 each coordinate ATP.

The protein belongs to the TmcAL family.

It localises to the cytoplasm. The enzyme catalyses cytidine(34) in elongator tRNA(Met) + acetate + ATP = N(4)-acetylcytidine(34) in elongator tRNA(Met) + AMP + diphosphate. In terms of biological role, catalyzes the formation of N(4)-acetylcytidine (ac(4)C) at the wobble position of elongator tRNA(Met), using acetate and ATP as substrates. First activates an acetate ion to form acetyladenylate (Ac-AMP) and then transfers the acetyl group to tRNA to form ac(4)C34. This chain is tRNA(Met) cytidine acetate ligase, found in Bacillus cereus (strain Q1).